A 387-amino-acid polypeptide reads, in one-letter code: Succinate--CoA ligase [ADP-forming] subunit beta (387 aa).

The ATP-grasp domain maps to 9 to 245 (KDLLESYGLK…KSQENAKELK (237 aa)). Residues Lys-46, 53 to 55 (GRG), Glu-100, Tyr-103, and Glu-108 each bind ATP. Asn-200 and Asp-214 together coordinate Mg(2+). Substrate contacts are provided by residues Asn-265 and 322–324 (GIV).

It belongs to the succinate/malate CoA ligase beta subunit family. In terms of assembly, heterotetramer of two alpha and two beta subunits. Requires Mg(2+) as cofactor.

It carries out the reaction succinate + ATP + CoA = succinyl-CoA + ADP + phosphate. It catalyses the reaction GTP + succinate + CoA = succinyl-CoA + GDP + phosphate. It functions in the pathway carbohydrate metabolism; tricarboxylic acid cycle; succinate from succinyl-CoA (ligase route): step 1/1. Functionally, succinyl-CoA synthetase functions in the citric acid cycle (TCA), coupling the hydrolysis of succinyl-CoA to the synthesis of either ATP or GTP and thus represents the only step of substrate-level phosphorylation in the TCA. The beta subunit provides nucleotide specificity of the enzyme and binds the substrate succinate, while the binding sites for coenzyme A and phosphate are found in the alpha subunit. The sequence is that of Succinate--CoA ligase [ADP-forming] subunit beta from Francisella tularensis subsp. mediasiatica (strain FSC147).